A 191-amino-acid polypeptide reads, in one-letter code: Protein G1-like1 (191 aa).

The disordered stretch occupies residues 1-29 (MDMIGMASPAESPGGGGTARPSRYESQKR). In terms of domain architecture, ALOG spans 23–150 (RYESQKRRDW…ARGIAYEKKR (128 aa)). The short motif at 148-152 (KKRRK) is the Nuclear localization signal element. The stretch at 152 to 179 (KRAAASHTKQKQQQQQLVEQAAAAAEAH) forms a coiled coil.

Belongs to the plant homeotic and developmental regulators ALOG protein family.

Its subcellular location is the nucleus. In terms of biological role, probable transcription regulator that acts as a developmental regulator by promoting cell growth in response to light. This is Protein G1-like1 from Oryza sativa subsp. indica (Rice).